We begin with the raw amino-acid sequence, 156 residues long: Small ribosomal subunit protein uS7 (156 aa).

This sequence belongs to the universal ribosomal protein uS7 family. In terms of assembly, part of the 30S ribosomal subunit. Contacts proteins S9 and S11.

One of the primary rRNA binding proteins, it binds directly to 16S rRNA where it nucleates assembly of the head domain of the 30S subunit. Is located at the subunit interface close to the decoding center, probably blocks exit of the E-site tRNA. The polypeptide is Small ribosomal subunit protein uS7 (Coprothermobacter proteolyticus (strain ATCC 35245 / DSM 5265 / OCM 4 / BT)).